The following is a 477-amino-acid chain: P3 protein (477 aa).

Residues 1–21 (MVFRSGEGHSLQWPGPEGGTG) are disordered. 8 helical membrane-spanning segments follow: residues 225-245 (PMLL…FLMA), 253-273 (ALAL…SYLF), 281-301 (VTLA…FLPL), 320-340 (VSKI…GVVI), 361-381 (VLLL…LAGV), 383-403 (LPIV…GYGL), 417-437 (VSIE…QLSL), and 450-470 (FLVA…HFIY).

This sequence belongs to the bile acid:sodium symporter (BASS) (TC 2.A.28) family.

It localises to the membrane. Functionally, the ubiquitous expression and the conservation of the sequence in distant animal species suggest that the gene codes for a protein with housekeeping functions. This Bos taurus (Bovine) protein is P3 protein (SLC10A3).